The primary structure comprises 31 residues: Photosystem II reaction center protein T (31 aa).

The helical transmembrane segment at 3 to 23 (ALVYTFLLVTTLGILFFSIIF) threads the bilayer.

Belongs to the PsbT family. PSII is composed of 1 copy each of membrane proteins PsbA, PsbB, PsbC, PsbD, PsbE, PsbF, PsbH, PsbI, PsbJ, PsbK, PsbL, PsbM, PsbT, PsbX, PsbY, PsbZ, Psb30/Ycf12, at least 3 peripheral proteins of the oxygen-evolving complex and a large number of cofactors. It forms dimeric complexes.

Its subcellular location is the plastid. It is found in the cyanelle thylakoid membrane. In terms of biological role, found at the monomer-monomer interface of the photosystem II (PS II) dimer, plays a role in assembly and dimerization of PSII. PSII is a light-driven water plastoquinone oxidoreductase, using light energy to abstract electrons from H(2)O, generating a proton gradient subsequently used for ATP formation. The polypeptide is Photosystem II reaction center protein T (Cyanophora paradoxa).